The sequence spans 376 residues: Dihydroorotate dehydrogenase (quinone) (376 aa).

FMN contacts are provided by residues 74-78 and threonine 98; that span reads AGFDK. Lysine 78 is a binding site for substrate. 123-127 lines the substrate pocket; that stretch reads NRMGF. The FMN site is built by asparagine 155 and asparagine 188. Asparagine 188 serves as a coordination point for substrate. Serine 191 (nucleophile) is an active-site residue. Asparagine 193 contributes to the substrate binding site. FMN is bound by residues lysine 226 and threonine 254. Position 255–256 (255–256) interacts with substrate; the sequence is NT. FMN is bound by residues glycine 284, glycine 313, and 334–335; that span reads YT.

It belongs to the dihydroorotate dehydrogenase family. Type 2 subfamily. In terms of assembly, monomer. FMN is required as a cofactor.

The protein localises to the cell membrane. It catalyses the reaction (S)-dihydroorotate + a quinone = orotate + a quinol. The protein operates within pyrimidine metabolism; UMP biosynthesis via de novo pathway; orotate from (S)-dihydroorotate (quinone route): step 1/1. Catalyzes the conversion of dihydroorotate to orotate with quinone as electron acceptor. The polypeptide is Dihydroorotate dehydrogenase (quinone) (Nostoc punctiforme (strain ATCC 29133 / PCC 73102)).